Here is a 375-residue protein sequence, read N- to C-terminus: 23S rRNA (uracil(747)-C(5))-methyltransferase RlmC (375 aa).

4 residues coordinate [4Fe-4S] cluster: cysteine 3, cysteine 11, cysteine 14, and cysteine 87. The S-adenosyl-L-methionine site is built by glutamine 212, phenylalanine 241, glutamate 262, and asparagine 307. Cysteine 334 serves as the catalytic Nucleophile.

The protein belongs to the class I-like SAM-binding methyltransferase superfamily. RNA M5U methyltransferase family. RlmC subfamily.

The enzyme catalyses uridine(747) in 23S rRNA + S-adenosyl-L-methionine = 5-methyluridine(747) in 23S rRNA + S-adenosyl-L-homocysteine + H(+). Catalyzes the formation of 5-methyl-uridine at position 747 (m5U747) in 23S rRNA. This is 23S rRNA (uracil(747)-C(5))-methyltransferase RlmC from Salmonella agona (strain SL483).